A 212-amino-acid chain; its full sequence is Methylthioribulose-1-phosphate dehydratase (212 aa).

Zn(2+) is bound by residues histidine 97 and histidine 99.

It belongs to the aldolase class II family. MtnB subfamily. In terms of assembly, homotetramer. The cofactor is Zn(2+).

It catalyses the reaction 5-(methylsulfanyl)-D-ribulose 1-phosphate = 5-methylsulfanyl-2,3-dioxopentyl phosphate + H2O. The protein operates within amino-acid biosynthesis; L-methionine biosynthesis via salvage pathway; L-methionine from S-methyl-5-thio-alpha-D-ribose 1-phosphate: step 2/6. Its function is as follows. Catalyzes the dehydration of methylthioribulose-1-phosphate (MTRu-1-P) into 2,3-diketo-5-methylthiopentyl-1-phosphate (DK-MTP-1-P). The protein is Methylthioribulose-1-phosphate dehydratase of Bacillus cereus (strain ZK / E33L).